The following is a 336-amino-acid chain: MPKTETYPRLLADIGGTNARFGLEVAPRQIECVEVLRCEDFESLSDAVRFYLSKCKESLKLHPIYGSFAVATPIMGDFVQMTNNHWTFSIETTRQCLNLKKLLVINDFVAQAYAISAMQENDLAQIGGIKCEINAPKAILGPGTGLGVSTLIQNSDGSLKVLPGEGGHVSFAPFDDLEILVWQYARSKFNHVSAERFLSGSGLVLIYEALSKRKGLEKVAKLSKAELTPQIISERALNGDYPICRLTLDTFCSMLGTLAADVALTLGARGGVYLCGGIIPRFIDYFKTSPFRARFETKGRMGAFLASIPVHVVMKKTPGLDGAGIALENYLLHDRI.

12–17 (ADIGGT) provides a ligand contact to ATP.

This sequence belongs to the bacterial glucokinase family.

It localises to the cytoplasm. The enzyme catalyses D-glucose + ATP = D-glucose 6-phosphate + ADP + H(+). The polypeptide is Glucokinase (Helicobacter pylori (strain J99 / ATCC 700824) (Campylobacter pylori J99)).